The primary structure comprises 581 residues: Probable bifunctional SAT/APS kinase 2 (581 aa).

An adenylsulfate kinase region spans residues Met1–Ala200. An ATP-binding site is contributed by Gly10–Ser17. The active-site Phosphoserine intermediate is the Ser84. The interval Pro201 to Ser581 is sulfate adenylyltransferase.

This sequence in the N-terminal section; belongs to the APS kinase family. In the C-terminal section; belongs to the sulfate adenylyltransferase family.

The enzyme catalyses sulfate + ATP + H(+) = adenosine 5'-phosphosulfate + diphosphate. It carries out the reaction adenosine 5'-phosphosulfate + ATP = 3'-phosphoadenylyl sulfate + ADP + H(+). It participates in sulfur metabolism; hydrogen sulfide biosynthesis; sulfite from sulfate: step 1/3. Its pathway is sulfur metabolism; hydrogen sulfide biosynthesis; sulfite from sulfate: step 2/3. The polypeptide is Probable bifunctional SAT/APS kinase 2 (sat2/cysC2) (Sorangium cellulosum (strain So ce56) (Polyangium cellulosum (strain So ce56))).